The primary structure comprises 386 residues: 8-amino-7-oxononanoate synthase (386 aa).

Arginine 20 contacts substrate. 107 to 108 is a binding site for pyridoxal 5'-phosphate; that stretch reads GY. Histidine 132 is a substrate binding site. The pyridoxal 5'-phosphate site is built by serine 178, histidine 206, and threonine 234. An N6-(pyridoxal phosphate)lysine modification is found at lysine 237. Residue threonine 351 coordinates substrate.

It belongs to the class-II pyridoxal-phosphate-dependent aminotransferase family. BioF subfamily. As to quaternary structure, homodimer. Pyridoxal 5'-phosphate serves as cofactor.

It carries out the reaction 6-carboxyhexanoyl-[ACP] + L-alanine + H(+) = (8S)-8-amino-7-oxononanoate + holo-[ACP] + CO2. The protein operates within cofactor biosynthesis; biotin biosynthesis. Functionally, catalyzes the decarboxylative condensation of pimeloyl-[acyl-carrier protein] and L-alanine to produce 8-amino-7-oxononanoate (AON), [acyl-carrier protein], and carbon dioxide. In Aromatoleum aromaticum (strain DSM 19018 / LMG 30748 / EbN1) (Azoarcus sp. (strain EbN1)), this protein is 8-amino-7-oxononanoate synthase.